The sequence spans 237 residues: Ergosterol biosynthesis protein 29 (237 aa).

Residues 36–56 form a helical membrane-spanning segment; that stretch reads ITLFLIVVGTLAFFNELYITI.

It localises to the endoplasmic reticulum membrane. Its function is as follows. Part of the third module of ergosterol biosynthesis pathway that includes the late steps of the pathway. ERG29 regulates the activity of the iron-containing C4-methylsterol oxidase ERG25. The third module or late pathway involves the ergosterol synthesis itself through consecutive reactions that mainly occur in the endoplasmic reticulum (ER) membrane. Firstly, the squalene synthase ERG9 catalyzes the condensation of 2 farnesyl pyrophosphate moieties to form squalene, which is the precursor of all steroids. Squalene synthase is crucial for balancing the incorporation of farnesyl diphosphate (FPP) into sterol and nonsterol isoprene synthesis. Secondly, the squalene epoxidase ERG1 catalyzes the stereospecific oxidation of squalene to (S)-2,3-epoxysqualene, which is considered to be a rate-limiting enzyme in steroid biosynthesis. Then, the lanosterol synthase ERG7 catalyzes the cyclization of (S)-2,3 oxidosqualene to lanosterol, a reaction that forms the sterol core. In the next steps, lanosterol is transformed to zymosterol through a complex process involving various demethylation, reduction and desaturation reactions. The lanosterol 14-alpha-demethylase ERG11 (also known as CYP51) catalyzes C14-demethylation of lanosterol to produce 4,4'-dimethyl cholesta-8,14,24-triene-3-beta-ol, which is critical for ergosterol biosynthesis. The C-14 reductase ERG24 reduces the C14=C15 double bond of 4,4-dimethyl-cholesta-8,14,24-trienol to produce 4,4-dimethyl-cholesta-8,24-dienol. 4,4-dimethyl-cholesta-8,24-dienol is substrate of the C-4 demethylation complex ERG25-ERG26-ERG27 in which ERG25 catalyzes the three-step monooxygenation required for the demethylation of 4,4-dimethyl and 4alpha-methylsterols, ERG26 catalyzes the oxidative decarboxylation that results in a reduction of the 3-beta-hydroxy group at the C-3 carbon to an oxo group, and ERG27 is responsible for the reduction of the keto group on the C-3. ERG28 has a role as a scaffold to help anchor ERG25, ERG26 and ERG27 to the endoplasmic reticulum and ERG29 regulates the activity of the iron-containing C4-methylsterol oxidase ERG25. Then, the sterol 24-C-methyltransferase ERG6 catalyzes the methyl transfer from S-adenosyl-methionine to the C-24 of zymosterol to form fecosterol. The C-8 sterol isomerase ERG2 catalyzes the reaction which results in unsaturation at C-7 in the B ring of sterols and thus converts fecosterol to episterol. The sterol-C5-desaturase ERG3 then catalyzes the introduction of a C-5 double bond in the B ring to produce 5-dehydroepisterol. The C-22 sterol desaturase ERG5 further converts 5-dehydroepisterol into ergosta-5,7,22,24(28)-tetraen-3beta-ol by forming the C-22(23) double bond in the sterol side chain. Finally, ergosta-5,7,22,24(28)-tetraen-3beta-ol is substrate of the C-24(28) sterol reductase ERG4 to produce ergosterol. In terms of biological role, plays a role in maintaining mitochondrial and plasma membrane integrity and consequently impacting the iron homeostasis, respiratory metabolism and antioxidant response. This is Ergosterol biosynthesis protein 29 from Saccharomyces cerevisiae (strain ATCC 204508 / S288c) (Baker's yeast).